The primary structure comprises 82 residues: Small ribosomal subunit protein bS18 (82 aa).

It belongs to the bacterial ribosomal protein bS18 family. In terms of assembly, part of the 30S ribosomal subunit. Forms a tight heterodimer with protein bS6.

Functionally, binds as a heterodimer with protein bS6 to the central domain of the 16S rRNA, where it helps stabilize the platform of the 30S subunit. The chain is Small ribosomal subunit protein bS18 from Methylobacterium nodulans (strain LMG 21967 / CNCM I-2342 / ORS 2060).